Consider the following 344-residue polypeptide: DNA-directed RNA polymerase subunit alpha (344 aa).

The segment at methionine 1–aspartate 239 is alpha N-terminal domain (alpha-NTD). Positions valine 254–aspartate 344 are alpha C-terminal domain (alpha-CTD).

It belongs to the RNA polymerase alpha chain family. In terms of assembly, homodimer. The RNAP catalytic core consists of 2 alpha, 1 beta, 1 beta' and 1 omega subunit. When a sigma factor is associated with the core the holoenzyme is formed, which can initiate transcription.

The catalysed reaction is RNA(n) + a ribonucleoside 5'-triphosphate = RNA(n+1) + diphosphate. DNA-dependent RNA polymerase catalyzes the transcription of DNA into RNA using the four ribonucleoside triphosphates as substrates. This is DNA-directed RNA polymerase subunit alpha from Anaplasma phagocytophilum (strain HZ).